Here is a 161-residue protein sequence, read N- to C-terminus: uncharacterized protein (161 aa).

Positions 1–35 (MVMAMGFDTVVAAIMATAIIVAVAYTFLAGSTSIA) are cleaved as a signal peptide.

This is an uncharacterized protein from Archaeoglobus fulgidus (strain ATCC 49558 / DSM 4304 / JCM 9628 / NBRC 100126 / VC-16).